The chain runs to 89 residues: Small ribosomal subunit protein uS15 (89 aa).

This sequence belongs to the universal ribosomal protein uS15 family. As to quaternary structure, part of the 30S ribosomal subunit. Forms a bridge to the 50S subunit in the 70S ribosome, contacting the 23S rRNA.

One of the primary rRNA binding proteins, it binds directly to 16S rRNA where it helps nucleate assembly of the platform of the 30S subunit by binding and bridging several RNA helices of the 16S rRNA. In terms of biological role, forms an intersubunit bridge (bridge B4) with the 23S rRNA of the 50S subunit in the ribosome. The chain is Small ribosomal subunit protein uS15 from Shewanella woodyi (strain ATCC 51908 / MS32).